A 223-amino-acid polypeptide reads, in one-letter code: Cell division protein SepF (223 aa).

The segment at 19–81 is disordered; the sequence is YDDEYYDDRG…YPPPGGYRGG (63 aa). Over residues 36 to 69 the composition is skewed to basic and acidic residues; the sequence is PRFEDDYGRYEGRDFEDPRRDPRAGMRADLRGEP.

The protein belongs to the SepF family. As to quaternary structure, homodimer. Interacts with FtsZ.

It is found in the cytoplasm. In terms of biological role, cell division protein that is part of the divisome complex and is recruited early to the Z-ring. Probably stimulates Z-ring formation, perhaps through the cross-linking of FtsZ protofilaments. Its function overlaps with FtsA. The polypeptide is Cell division protein SepF (Mycobacterium ulcerans (strain Agy99)).